The sequence spans 510 residues: MEDIKDSKVKRFCSKNILIILGFTSILAVIALIAVGLTQNKPLPENVKYGIVLDAGSSHTNLYIYKWPAEKENDTGVVQQLEECQVKGPGISKYAQKTDEIGAYLAECMELSTELIPTSKHHQTPVYLGATAGMRLLRMESEQSADEVLAAVSTSLKSYPFDFQGAKIITGQEEGAYGWITINYLLGRFTQEQSWLSLISDSQKQETFGALDLGGASTQITFVPQNSTIESPENSLQFRLYGEDYTVYTHSFLCYGKDQALWQKLAKDIQVSSGGVLKDPCFNPGYEKVVNVSELYGTPCTKRFEKKLPFDQFRIQGTGDYEQCHQSILELFNNSHCPYSQCAFNGVFLPPLHGSFGAFSAFYFVMDFFKKVAKNSVISQEKMTEITKNFCSKSWEETKTSYPSVKEKYLSEYCFSGAYILSLLQGYNFTDSSWEQIHFMGKIKDSNAGWTLGYMLNLTNMIPAEQPLSPPLPHSTYIGLMVLFSLLLVAVAITGLFIYSKPSYFWKEAV.

Topologically, residues 1-16 are cytoplasmic; sequence MEDIKDSKVKRFCSKN. A helical membrane pass occupies residues 17–37; that stretch reads ILIILGFTSILAVIALIAVGL. Topologically, residues 38 to 478 are extracellular; it reads TQNKPLPENV…SPPLPHSTYI (441 aa). N-linked (GlcNAc...) asparagine glycosylation occurs at asparagine 73. An intrachain disulfide couples cysteine 84 to cysteine 108. Glutamate 174 acts as the Proton acceptor in catalysis. Residues asparagine 226, asparagine 291, and asparagine 333 are each glycosylated (N-linked (GlcNAc...) asparagine). Intrachain disulfides connect cysteine 254-cysteine 300 and cysteine 281-cysteine 324. Intrachain disulfides connect cysteine 337-cysteine 342 and cysteine 391-cysteine 414. Residues asparagine 428 and asparagine 457 are each glycosylated (N-linked (GlcNAc...) asparagine). Residues 479–499 traverse the membrane as a helical segment; the sequence is GLMVLFSLLLVAVAITGLFIY. Residues 500 to 510 lie on the Cytoplasmic side of the membrane; it reads SKPSYFWKEAV.

This sequence belongs to the GDA1/CD39 NTPase family. As to quaternary structure, homodimer; disulfide-linked. Ca(2+) is required as a cofactor. Requires Mg(2+) as cofactor. N-glycosylated. Post-translationally, the N-terminus is blocked. In terms of processing, palmitoylated on Cys-13; which is required for caveola targeting.

It localises to the membrane. The protein localises to the caveola. The enzyme catalyses a ribonucleoside 5'-triphosphate + 2 H2O = a ribonucleoside 5'-phosphate + 2 phosphate + 2 H(+). It catalyses the reaction a ribonucleoside 5'-triphosphate + H2O = a ribonucleoside 5'-diphosphate + phosphate + H(+). It carries out the reaction a ribonucleoside 5'-diphosphate + H2O = a ribonucleoside 5'-phosphate + phosphate + H(+). The catalysed reaction is ATP + 2 H2O = AMP + 2 phosphate + 2 H(+). The enzyme catalyses ATP + H2O = ADP + phosphate + H(+). It catalyses the reaction ADP + H2O = AMP + phosphate + H(+). It carries out the reaction CTP + 2 H2O = CMP + 2 phosphate + 2 H(+). The catalysed reaction is CTP + H2O = CDP + phosphate + H(+). The enzyme catalyses CDP + H2O = CMP + phosphate + H(+). It catalyses the reaction GTP + 2 H2O = GMP + 2 phosphate + 2 H(+). It carries out the reaction GTP + H2O = GDP + phosphate + H(+). The catalysed reaction is GDP + H2O = GMP + phosphate + H(+). The enzyme catalyses ITP + 2 H2O = IMP + 2 phosphate + 2 H(+). It catalyses the reaction ITP + H2O = IDP + phosphate + H(+). It carries out the reaction IDP + H2O = IMP + phosphate + H(+). The catalysed reaction is UTP + 2 H2O = UMP + 2 phosphate + 2 H(+). The enzyme catalyses UTP + H2O = UDP + phosphate + H(+). It catalyses the reaction UDP + H2O = UMP + phosphate + H(+). In terms of biological role, catalyzes the hydrolysis of both di- and triphosphate nucleotides (NDPs and NTPs) and hydrolyze NTPs to nucleotide monophosphates (NMPs) in two distinct successive phosphate-releasing steps, with NDPs as intermediates and participates in the regulation of extracellular levels of nucleotides. By hydrolyzing proinflammatory ATP and platelet-activating ADP to AMP, it blocks platelet aggregation and supports blood flow. The protein is Ectonucleoside triphosphate diphosphohydrolase 1 of Mus musculus (Mouse).